A 243-amino-acid polypeptide reads, in one-letter code: Proteasome subunit beta (243 aa).

Composition is skewed to basic and acidic residues over residues 1–11 (MRTPTHDEFSG) and 33–47 (NADR…KETK). Residues 1–49 (MRTPTHDEFSGRLDSLNGDRSNVFGPELGEFSNADRRADELGDKETKTG) constitute a propeptide, removed in mature form; by autocatalysis. The tract at residues 1 to 50 (MRTPTHDEFSGRLDSLNGDRSNVFGPELGEFSNADRRADELGDKETKTGT) is disordered. The Nucleophile role is filled by T50. A Phosphoserine modification is found at S129.

It belongs to the peptidase T1B family. In terms of assembly, the 20S proteasome core is composed of 14 alpha and 14 beta subunits that assemble into four stacked heptameric rings, resulting in a barrel-shaped structure. The two inner rings, each composed of seven catalytic beta subunits, are sandwiched by two outer rings, each composed of seven alpha subunits. H.volcanii produces at least 2 types of 20S proteasomes: an alpha1-beta proteasome and a proteasome containing all three subunits (alpha1, alpha2, and beta) that appears to be asymmetrical with homo-oligomeric alpha1 and alpha2 rings positioned on separate ends. The catalytic chamber with the active sites is on the inside of the barrel. Has probably a gated structure, the ends of the cylinder being occluded by the N-termini of the alpha-subunits. Is likely capped at one or both ends by the proteasome regulatory ATPase, PAN.

The protein localises to the cytoplasm. The catalysed reaction is Cleavage of peptide bonds with very broad specificity.. Its activity is regulated as follows. The formation of the proteasomal ATPase PAN-20S proteasome complex, via the docking of the C-termini of PAN into the intersubunit pockets in the alpha-rings, triggers opening of the gate for substrate entry. Interconversion between the open-gate and close-gate conformations leads to a dynamic regulation of the 20S proteasome proteolysis activity. In vitro, the chymotrypsin-like activity of the alpha1-beta proteasome is potently inhibited by carbobenzoxyl-leucinyl-leucinyl-leucinal-H (MG132) and significantly by N-acetyl-leucinyl-leucinyl-norleucinal-H (calpain inhibitor I). Functionally, component of the proteasome core, a large protease complex with broad specificity involved in protein degradation. The H.volcanii alpha1-beta proteasome is able to cleave oligopeptides after Phe, Tyr and Trp, poorly after Glu but not after Arg. Thus, displays chymotrypsin-like activity, low caspase-like activity but no trypsin-like activity. This chain is Proteasome subunit beta, found in Haloferax volcanii (strain ATCC 29605 / DSM 3757 / JCM 8879 / NBRC 14742 / NCIMB 2012 / VKM B-1768 / DS2) (Halobacterium volcanii).